Reading from the N-terminus, the 211-residue chain is Probable nicotinate-nucleotide adenylyltransferase (211 aa).

It belongs to the NadD family.

It carries out the reaction nicotinate beta-D-ribonucleotide + ATP + H(+) = deamido-NAD(+) + diphosphate. It participates in cofactor biosynthesis; NAD(+) biosynthesis; deamido-NAD(+) from nicotinate D-ribonucleotide: step 1/1. Functionally, catalyzes the reversible adenylation of nicotinate mononucleotide (NaMN) to nicotinic acid adenine dinucleotide (NaAD). The chain is Probable nicotinate-nucleotide adenylyltransferase from Shewanella sediminis (strain HAW-EB3).